A 117-amino-acid polypeptide reads, in one-letter code: Large ribosomal subunit protein bL20 (117 aa).

Belongs to the bacterial ribosomal protein bL20 family.

In terms of biological role, binds directly to 23S ribosomal RNA and is necessary for the in vitro assembly process of the 50S ribosomal subunit. It is not involved in the protein synthesizing functions of that subunit. The chain is Large ribosomal subunit protein bL20 from Citrifermentans bemidjiense (strain ATCC BAA-1014 / DSM 16622 / JCM 12645 / Bem) (Geobacter bemidjiensis).